The following is a 172-amino-acid chain: Regulator of hemoglobinization and erythroid cell expansion protein (172 aa).

A helical membrane pass occupies residues 9–29 (WHGLVIAVVSLFLQACFLTAI). The disordered stretch occupies residues 52–106 (VPRPSPGHHHPPAVKEMKETQTERDIPMSDSLYRHDSDTPSDSLDSSCSSPPACQ). Residues 64–89 (AVKEMKETQTERDIPMSDSLYRHDSD) show a composition bias toward basic and acidic residues. Residues 91 to 103 (PSDSLDSSCSSPP) are compositionally biased toward low complexity. 2 positions are modified to phosphotyrosine: tyrosine 132 and tyrosine 141.

Interacts with EPOR; this interaction occurs in a erythropoietin (EPO)-dependent manner. Interacts with JAK2; this interaction occurs in a erythropoietin (EPO)-dependent manner. Interacts (via tyrosine-phosphorylated form) with GRB2. In terms of processing, phosphorylated. Phosphorylation on Tyr-132 and Tyr-141 occurs in a erythropoietin (EPO)-dependent manner. In terms of tissue distribution, expressed in the proerythroblasts (at protein level). Expressed strongly in the kidney. Expressed weakly in the pancreas, liver and lung. Expressed strongly in erythroid progenitor cells (EPCs). Expressed weakly in T-cells and neutrophils.

The protein localises to the cell membrane. In terms of biological role, acts as a signaling transduction factor of the EPO-EPOR signaling pathway promoting erythroid cell differentiation. This chain is Regulator of hemoglobinization and erythroid cell expansion protein, found in Homo sapiens (Human).